A 424-amino-acid polypeptide reads, in one-letter code: Tol-Pal system protein TolB (424 aa).

The signal sequence occupies residues 1–20 (MKQFIVFILSLYTTLSWAVL).

The protein belongs to the TolB family. In terms of assembly, the Tol-Pal system is composed of five core proteins: the inner membrane proteins TolA, TolQ and TolR, the periplasmic protein TolB and the outer membrane protein Pal. They form a network linking the inner and outer membranes and the peptidoglycan layer.

It is found in the periplasm. Functionally, part of the Tol-Pal system, which plays a role in outer membrane invagination during cell division and is important for maintaining outer membrane integrity. This chain is Tol-Pal system protein TolB, found in Vesicomyosocius okutanii subsp. Calyptogena okutanii (strain HA).